The primary structure comprises 432 residues: uncharacterized protein (432 aa).

2 consecutive SIS domains span residues 105–244 and 277–422; these read WLTE…DLVS and CDKK…VDLP.

This is an uncharacterized protein from Saccharomyces cerevisiae (strain Lalvin EC1118 / Prise de mousse) (Baker's yeast).